The primary structure comprises 298 residues: MDQKQIEEIVRSVMASMGQDVPQPVAPSTQEGAKPQRAAPTATESCALDLGSAEAKAWIGVENPHRADVLTELRRSTAARVCTGRAGPRPRTQALLRFLADHSRSKDTVLKEVPEEWVKAQGLLEVRSEISDKNRYLTRPDMGRRLSQEAIDALKSQCVMNPDVQVVISDGLSTDAITANYEEILPPLLAGLKQAGLKVGTPFFVRYGRVKIEDQIGELLGAKVVILLVGERPGLGQSESLSCYAVYSPRVTTTVEADRTCISNIHQGGTPPVEAAAVIVDLAKRMLEQKASGINMTR.

Positions 15–43 (ASMGQDVPQPVAPSTQEGAKPQRAAPTAT) are disordered. Residues Val-210, Glu-231, and Cys-261 each contribute to the adenosylcob(III)alamin site.

This sequence belongs to the EutC family. The basic unit is a heterodimer which dimerizes to form tetramers. The heterotetramers trimerize; 6 large subunits form a core ring with 6 small subunits projecting outwards. Requires adenosylcob(III)alamin as cofactor.

The protein localises to the bacterial microcompartment. It catalyses the reaction ethanolamine = acetaldehyde + NH4(+). Its pathway is amine and polyamine degradation; ethanolamine degradation. In terms of biological role, catalyzes the deamination of various vicinal amino-alcohols to oxo compounds. Allows this organism to utilize ethanolamine as the sole source of nitrogen and carbon in the presence of external vitamin B12. In Salmonella arizonae (strain ATCC BAA-731 / CDC346-86 / RSK2980), this protein is Ethanolamine ammonia-lyase small subunit.